Reading from the N-terminus, the 175-residue chain is Ribosome maturation factor RimM (175 aa).

One can recognise a PRC barrel domain in the interval 97-170 (NGQYYWTDVL…YLYVDWQMAW (74 aa)).

Belongs to the RimM family. Binds ribosomal protein uS19.

The protein localises to the cytoplasm. In terms of biological role, an accessory protein needed during the final step in the assembly of 30S ribosomal subunit, possibly for assembly of the head region. Essential for efficient processing of 16S rRNA. May be needed both before and after RbfA during the maturation of 16S rRNA. It has affinity for free ribosomal 30S subunits but not for 70S ribosomes. The sequence is that of Ribosome maturation factor RimM from Dichelobacter nodosus (strain VCS1703A).